A 420-amino-acid chain; its full sequence is UDP-N-acetylglucosamine 1-carboxyvinyltransferase (420 aa).

22–23 (KN) lines the phosphoenolpyruvate pocket. Position 93 (arginine 93) interacts with UDP-N-acetyl-alpha-D-glucosamine. The active-site Proton donor is the cysteine 117. 2-(S-cysteinyl)pyruvic acid O-phosphothioketal is present on cysteine 117. UDP-N-acetyl-alpha-D-glucosamine contacts are provided by residues 122–126 (RPVDL), aspartate 307, and valine 329.

This sequence belongs to the EPSP synthase family. MurA subfamily.

It is found in the cytoplasm. It carries out the reaction phosphoenolpyruvate + UDP-N-acetyl-alpha-D-glucosamine = UDP-N-acetyl-3-O-(1-carboxyvinyl)-alpha-D-glucosamine + phosphate. It functions in the pathway cell wall biogenesis; peptidoglycan biosynthesis. In terms of biological role, cell wall formation. Adds enolpyruvyl to UDP-N-acetylglucosamine. The protein is UDP-N-acetylglucosamine 1-carboxyvinyltransferase of Hahella chejuensis (strain KCTC 2396).